The sequence spans 395 residues: 1-deoxy-D-xylulose 5-phosphate reductoisomerase (395 aa).

Positions 10, 11, 12, 13, 36, and 123 each coordinate NADPH. Lys-124 provides a ligand contact to 1-deoxy-D-xylulose 5-phosphate. Glu-125 contacts NADPH. Asp-149 contacts Mn(2+). 1-deoxy-D-xylulose 5-phosphate-binding residues include Ser-150, Glu-151, Ser-185, and His-208. Glu-151 is a Mn(2+) binding site. Position 214 (Gly-214) interacts with NADPH. Positions 221, 226, 227, and 230 each coordinate 1-deoxy-D-xylulose 5-phosphate. Residue Glu-230 participates in Mn(2+) binding.

It belongs to the DXR family. It depends on Mg(2+) as a cofactor. Mn(2+) serves as cofactor.

It catalyses the reaction 2-C-methyl-D-erythritol 4-phosphate + NADP(+) = 1-deoxy-D-xylulose 5-phosphate + NADPH + H(+). The protein operates within isoprenoid biosynthesis; isopentenyl diphosphate biosynthesis via DXP pathway; isopentenyl diphosphate from 1-deoxy-D-xylulose 5-phosphate: step 1/6. In terms of biological role, catalyzes the NADPH-dependent rearrangement and reduction of 1-deoxy-D-xylulose-5-phosphate (DXP) to 2-C-methyl-D-erythritol 4-phosphate (MEP). The chain is 1-deoxy-D-xylulose 5-phosphate reductoisomerase from Shewanella amazonensis (strain ATCC BAA-1098 / SB2B).